A 593-amino-acid chain; its full sequence is NADH-quinone oxidoreductase subunit C/D (593 aa).

The NADH dehydrogenase I subunit C stretch occupies residues 1-184 (MTTGSALYIP…DPFSLNLAKQ (184 aa)). The tract at residues 208–593 (DYMFLNLGPN…IDFVMADVDR (386 aa)) is NADH dehydrogenase I subunit D.

In the N-terminal section; belongs to the complex I 30 kDa subunit family. It in the C-terminal section; belongs to the complex I 49 kDa subunit family. NDH-1 is composed of 13 different subunits. Subunits NuoB, CD, E, F, and G constitute the peripheral sector of the complex.

It is found in the cell inner membrane. The enzyme catalyses a quinone + NADH + 5 H(+)(in) = a quinol + NAD(+) + 4 H(+)(out). NDH-1 shuttles electrons from NADH, via FMN and iron-sulfur (Fe-S) centers, to quinones in the respiratory chain. The immediate electron acceptor for the enzyme in this species is believed to be ubiquinone. Couples the redox reaction to proton translocation (for every two electrons transferred, four hydrogen ions are translocated across the cytoplasmic membrane), and thus conserves the redox energy in a proton gradient. The protein is NADH-quinone oxidoreductase subunit C/D of Pseudomonas fluorescens (strain ATCC BAA-477 / NRRL B-23932 / Pf-5).